Here is a 235-residue protein sequence, read N- to C-terminus: Eukaryotic translation initiation factor 4E-1 (235 aa).

Over residues 16–25 the composition is skewed to basic and acidic residues; the sequence is VNKHRGVRSD. Residues 16–56 form a disordered region; that stretch reads VNKHRGVRSDGEEDEQLEEGEIVGGDADTLSSSSSSRPGTA. Residues 26-36 are compositionally biased toward acidic residues; the sequence is GEEDEQLEEGE. EIF4G-binding regions lie at residues 60 to 63 and 70 to 106; these read HPLE and FDTP…NNIH. MRNA contacts are provided by residues 78-83, Lys-110, and 128-129; these read KQVAWG and WE. Cys-133 and Cys-171 form a disulfide bridge. The segment at 154–163 is EIF4G-binding; that stretch reads YTLLAMIGEQ. MRNA-binding positions include 178–183 and 223–227; these read RARQEK and KTLDR.

Belongs to the eukaryotic initiation factor 4E family. In terms of assembly, EIF4F is a multi-subunit complex, the composition of which varies with external and internal environmental conditions. It is composed of at least EIF4A, EIF4E and EIF4G. EIF4E is also known to interact with other partners. In higher plants two isoforms of EIF4F have been identified, named isoform EIF4F and isoform EIF(iso)4F. Isoform EIF4F has subunits p220 and p26, whereas isoform EIF(iso)4F has subunits p82 and p28. (Microbial infection) Interacts with potyvirus viral genome-linked protein (VPg); this interaction is possible in susceptible hosts but impaired in resistant plants. Post-translationally, according to the redox status, the Cys-133-Cys-171 disulfide bridge may have a role in regulating protein function by affecting its ability to bind capped mRNA.

It localises to the nucleus. It is found in the cytoplasm. In terms of biological role, component of the protein complex eIF4F, which is involved in the recognition of the mRNA cap, ATP-dependent unwinding of 5'-terminal secondary structure and recruitment of mRNA to the ribosome. Recognizes and binds the 7-methylguanosine-containing mRNA cap during an early step in the initiation of protein synthesis and facilitates ribosome binding by inducing the unwinding of the mRNAs secondary structures. Key component of recessive resistance to potyviruses. Its function is as follows. (Microbial infection) Susceptibility host factor required for viral infection by recruiting viral RNAs to the host ribosomal complex via an interaction with viral genome-linked protein (VPg). This is Eukaryotic translation initiation factor 4E-1 from Lactuca sativa (Garden lettuce).